The primary structure comprises 105 residues: Met repressor (105 aa).

This sequence belongs to the MetJ family. In terms of assembly, homodimer.

Its subcellular location is the cytoplasm. Functionally, this regulatory protein, when combined with SAM (S-adenosylmethionine) represses the expression of the methionine regulon and of enzymes involved in SAM synthesis. In Haemophilus ducreyi (strain 35000HP / ATCC 700724), this protein is Met repressor.